We begin with the raw amino-acid sequence, 417 residues long: Glutamyl-tRNA reductase (417 aa).

Residues 49-52 (TCNR), serine 107, 112-114 (EEQ), and glutamine 118 each bind substrate. The active-site Nucleophile is the cysteine 50. 187 to 192 (GTGEVS) contacts NADP(+).

Belongs to the glutamyl-tRNA reductase family. In terms of assembly, homodimer.

It catalyses the reaction (S)-4-amino-5-oxopentanoate + tRNA(Glu) + NADP(+) = L-glutamyl-tRNA(Glu) + NADPH + H(+). Its pathway is porphyrin-containing compound metabolism; protoporphyrin-IX biosynthesis; 5-aminolevulinate from L-glutamyl-tRNA(Glu): step 1/2. Catalyzes the NADPH-dependent reduction of glutamyl-tRNA(Glu) to glutamate 1-semialdehyde (GSA). The protein is Glutamyl-tRNA reductase of Cenarchaeum symbiosum (strain A).